The sequence spans 397 residues: 1-deoxy-D-xylulose 5-phosphate reductoisomerase (397 aa).

The NADPH site is built by Thr10, Gly11, Ser12, Ile13, Asn38, and Asn125. Residue Lys126 participates in 1-deoxy-D-xylulose 5-phosphate binding. An NADPH-binding site is contributed by Glu127. Residue Asp151 participates in Mn(2+) binding. 4 residues coordinate 1-deoxy-D-xylulose 5-phosphate: Ser152, Glu153, Ser187, and His210. Glu153 provides a ligand contact to Mn(2+). Gly216 contacts NADPH. 4 residues coordinate 1-deoxy-D-xylulose 5-phosphate: Ser223, Asn228, Lys229, and Glu232. Glu232 provides a ligand contact to Mn(2+).

It belongs to the DXR family. In terms of assembly, homodimer. It depends on Mg(2+) as a cofactor. Mn(2+) serves as cofactor.

The catalysed reaction is 2-C-methyl-D-erythritol 4-phosphate + NADP(+) = 1-deoxy-D-xylulose 5-phosphate + NADPH + H(+). It functions in the pathway isoprenoid biosynthesis; isopentenyl diphosphate biosynthesis via DXP pathway; isopentenyl diphosphate from 1-deoxy-D-xylulose 5-phosphate: step 1/6. Catalyzes the NADPH-dependent rearrangement and reduction of 1-deoxy-D-xylulose-5-phosphate (DXP) to 2-C-methyl-D-erythritol 4-phosphate (MEP). This is 1-deoxy-D-xylulose 5-phosphate reductoisomerase from Blochmanniella pennsylvanica (strain BPEN).